The sequence spans 433 residues: Probable M18 family aminopeptidase 2 (433 aa).

Residues His-79, His-153, and His-404 each coordinate Zn(2+).

It belongs to the peptidase M18 family. Requires Zn(2+) as cofactor.

This chain is Probable M18 family aminopeptidase 2 (apeB), found in Mycobacterium bovis (strain ATCC BAA-935 / AF2122/97).